The sequence spans 475 residues: MAANGGDHTSARPHVVLLPSAGMGHLVPFARLAVALSEGHGCNVSVAAVQPTVSSAESRLLDALFVAAAPAVRRLDFRLAPFDESEFPGADPFFLRFEATRRSAPLLGPLLDAAEASALVTDIVLASVALPVARERGVPCYVLFTSSAAMLSLCAYFPAYLDAHAAAGSVGVGVGNVDIPGVFRIPKSSVPQALHDPDHLFTQQFVANGRCLVACDGILVNTFDAFEPDAVTALRQGSITVSGGFPPVFTVGPMLPVRFQAEETADYMRWLSAQPPRSVVYVSFGSRKAIPRDQLRELAAGLEASGKRFLWVVKSTIVDRDDTADLGGLLGDGFLERVQGRAFVTMGWVEQEEILQHGSVGLFISHCGWNSLTEAAAFGVPVLAWPRFGDQRVNAALVARSGLGAWEEGWTWDGEEGLTTRKEVAKKIKGMMGYDAVAEKAAKVGDAAAAAIAKCGTSYQSLEEFVQRCRDAERK.

UDP-alpha-D-glucose contacts are provided by residues serine 286, tryptophan 348–valine 349, histidine 366–glutamate 374, and phenylalanine 388–glutamine 391.

It belongs to the UDP-glycosyltransferase family. Expressed in radicles, hypocotyls and juvenile leaves. Expressed at low levels in roots.

Bifunctional glycosyltransferase that can produce both C- and O-glycosidated flavonoids. Converts 2-hydroxynaringenin to isovitexin. Converts eriodictyol to orientin and isoorientin. Converts naringenin and eriodictyol to naringenin 7-O-glucoside and eriodictyol 7-O-glucoside, respectively. This is UDP-glycosyltransferase 708A6 from Zea mays (Maize).